The sequence spans 550 residues: tRNA modification GTPase MnmE (550 aa).

(6S)-5-formyl-5,6,7,8-tetrahydrofolate-binding residues include Arg20, Glu78, and Arg116. A TrmE-type G domain is found at 212 to 478; the sequence is GFSVVIVGKP…LLDKIFDIIS (267 aa). Asn222 provides a ligand contact to K(+). GTP contacts are provided by residues 222-227, 241-247, and 266-269; these read NVGKST, TDIPGTT, and DTAG. Ser226 serves as a coordination point for Mg(2+). Residues Thr241, Ile243, and Thr246 each coordinate K(+). Mg(2+) is bound at residue Thr247. Lys550 contributes to the (6S)-5-formyl-5,6,7,8-tetrahydrofolate binding site.

It belongs to the TRAFAC class TrmE-Era-EngA-EngB-Septin-like GTPase superfamily. TrmE GTPase family. As to quaternary structure, homodimer. Heterotetramer of two MnmE and two MnmG subunits. K(+) serves as cofactor.

The protein localises to the cytoplasm. Exhibits a very high intrinsic GTPase hydrolysis rate. Involved in the addition of a carboxymethylaminomethyl (cmnm) group at the wobble position (U34) of certain tRNAs, forming tRNA-cmnm(5)s(2)U34. The polypeptide is tRNA modification GTPase MnmE (Neorickettsia sennetsu (strain ATCC VR-367 / Miyayama) (Ehrlichia sennetsu)).